A 500-amino-acid polypeptide reads, in one-letter code: Tektin-like protein 1 (500 aa).

The segment at M1–A25 is disordered. S14 carries the post-translational modification Phosphoserine. Positions M198–S229 form a coiled coil. The disordered stretch occupies residues V265–V286. Y372 bears the Phosphotyrosine mark. Residues L422–N448 adopt a coiled-coil conformation.

Microtubule inner protein component of sperm flagellar doublet microtubules.

The protein localises to the cytoplasm. It localises to the cytoskeleton. It is found in the flagellum axoneme. Microtubule inner protein (MIP) part of the dynein-decorated doublet microtubules (DMTs) in sperm flagellar axoneme, which is required for motile flagellum beating. Forms an extensive interaction network cross-linking the lumen of axonemal doublet microtubules. The protein is Tektin-like protein 1 of Rattus norvegicus (Rat).